A 984-amino-acid polypeptide reads, in one-letter code: Valine--tRNA ligase (984 aa).

The 'HIGH' region motif lies at 65–75; sequence PNVTGSLHMGH. A 'KMSKS' region motif is present at residues 579–583; that stretch reads KMSKS. Residue lysine 582 coordinates ATP. Positions 954-984 form a coiled coil; it reads VEVVDAEKAKLAELEGQLTAMTAQMEELKNL.

Belongs to the class-I aminoacyl-tRNA synthetase family. ValS type 1 subfamily. As to quaternary structure, monomer.

Its subcellular location is the cytoplasm. The catalysed reaction is tRNA(Val) + L-valine + ATP = L-valyl-tRNA(Val) + AMP + diphosphate. Functionally, catalyzes the attachment of valine to tRNA(Val). As ValRS can inadvertently accommodate and process structurally similar amino acids such as threonine, to avoid such errors, it has a 'posttransfer' editing activity that hydrolyzes mischarged Thr-tRNA(Val) in a tRNA-dependent manner. The chain is Valine--tRNA ligase from Psychrobacter arcticus (strain DSM 17307 / VKM B-2377 / 273-4).